Consider the following 401-residue polypeptide: Probable tRNA sulfurtransferase (401 aa).

The 106-residue stretch at 60–165 (EPIIDKLKTV…QDGTYVTCHD (106 aa)) folds into the THUMP domain. ATP is bound by residues 183 to 184 (ML), 208 to 209 (HF), Arg265, Gly287, and Gln296.

Belongs to the ThiI family.

The protein resides in the cytoplasm. It catalyses the reaction [ThiI sulfur-carrier protein]-S-sulfanyl-L-cysteine + a uridine in tRNA + 2 reduced [2Fe-2S]-[ferredoxin] + ATP + H(+) = [ThiI sulfur-carrier protein]-L-cysteine + a 4-thiouridine in tRNA + 2 oxidized [2Fe-2S]-[ferredoxin] + AMP + diphosphate. The enzyme catalyses [ThiS sulfur-carrier protein]-C-terminal Gly-Gly-AMP + S-sulfanyl-L-cysteinyl-[cysteine desulfurase] + AH2 = [ThiS sulfur-carrier protein]-C-terminal-Gly-aminoethanethioate + L-cysteinyl-[cysteine desulfurase] + A + AMP + 2 H(+). Its pathway is cofactor biosynthesis; thiamine diphosphate biosynthesis. Catalyzes the ATP-dependent transfer of a sulfur to tRNA to produce 4-thiouridine in position 8 of tRNAs, which functions as a near-UV photosensor. Also catalyzes the transfer of sulfur to the sulfur carrier protein ThiS, forming ThiS-thiocarboxylate. This is a step in the synthesis of thiazole, in the thiamine biosynthesis pathway. The sulfur is donated as persulfide by IscS. The polypeptide is Probable tRNA sulfurtransferase (Geobacillus thermodenitrificans (strain NG80-2)).